The chain runs to 151 residues: Deoxyuridine 5'-triphosphate nucleotidohydrolase (151 aa).

Substrate contacts are provided by residues 70 to 72 (RSG), asparagine 83, 87 to 89 (LID), and methionine 97.

This sequence belongs to the dUTPase family. Mg(2+) is required as a cofactor.

The enzyme catalyses dUTP + H2O = dUMP + diphosphate + H(+). The protein operates within pyrimidine metabolism; dUMP biosynthesis; dUMP from dCTP (dUTP route): step 2/2. In terms of biological role, this enzyme is involved in nucleotide metabolism: it produces dUMP, the immediate precursor of thymidine nucleotides and it decreases the intracellular concentration of dUTP so that uracil cannot be incorporated into DNA. The sequence is that of Deoxyuridine 5'-triphosphate nucleotidohydrolase from Haemophilus influenzae (strain 86-028NP).